The sequence spans 157 residues: S-ribosylhomocysteine lyase (157 aa).

3 residues coordinate Fe cation: histidine 54, histidine 58, and cysteine 126.

The protein belongs to the LuxS family. As to quaternary structure, homodimer. Requires Fe cation as cofactor.

The catalysed reaction is S-(5-deoxy-D-ribos-5-yl)-L-homocysteine = (S)-4,5-dihydroxypentane-2,3-dione + L-homocysteine. In terms of biological role, involved in the synthesis of autoinducer 2 (AI-2) which is secreted by bacteria and is used to communicate both the cell density and the metabolic potential of the environment. The regulation of gene expression in response to changes in cell density is called quorum sensing. Catalyzes the transformation of S-ribosylhomocysteine (RHC) to homocysteine (HC) and 4,5-dihydroxy-2,3-pentadione (DPD). The polypeptide is S-ribosylhomocysteine lyase (Bacillus cereus (strain G9842)).